The sequence spans 231 residues: Ion-translocating oxidoreductase complex subunit E (231 aa).

6 consecutive transmembrane segments (helical) span residues 18–38, 39–59, 63–83, 86–106, 125–145, and 182–202; these read ALVQ…ATNA, LGLG…ISTL, TPAE…VSAV, LINA…PLIV, ALSA…MFVL, and PFLL…MLAG.

The protein belongs to the NqrDE/RnfAE family. In terms of assembly, the complex is composed of six subunits: RsxA, RsxB, RsxC, RsxD, RsxE and RsxG.

Its subcellular location is the cell inner membrane. Functionally, part of a membrane-bound complex that couples electron transfer with translocation of ions across the membrane. Required to maintain the reduced state of SoxR. The protein is Ion-translocating oxidoreductase complex subunit E of Escherichia coli (strain ATCC 8739 / DSM 1576 / NBRC 3972 / NCIMB 8545 / WDCM 00012 / Crooks).